Reading from the N-terminus, the 342-residue chain is RNA 3'-terminal phosphate cyclase (342 aa).

The protein belongs to the RNA 3'-terminal cyclase family. Type 1 subfamily.

Its subcellular location is the cytoplasm. The enzyme catalyses a 3'-end 3'-phospho-ribonucleotide-RNA + GTP = a 3'-end 2',3'-cyclophospho-ribonucleotide-RNA + GMP + diphosphate. With respect to regulation, inhibited by GMP. Functionally, catalyzes the GTP-dependent conversion of 3'-phosphate to a 2',3'-cyclic phosphodiester at the end of RNA. The biological role of this enzyme is unknown but it is likely to function in some aspects of cellular RNA processing. The polypeptide is RNA 3'-terminal phosphate cyclase (Pyrococcus furiosus (strain ATCC 43587 / DSM 3638 / JCM 8422 / Vc1)).